The sequence spans 245 residues: Outer membrane protein assembly factor BamD (245 aa).

The first 19 residues, M1–G19, serve as a signal peptide directing secretion. A lipid anchor (N-palmitoyl cysteine) is attached at C20. C20 carries S-diacylglycerol cysteine lipidation.

Belongs to the BamD family. As to quaternary structure, part of the Bam complex, which is composed of the outer membrane protein BamA, and four lipoproteins BamB, BamC, BamD and BamE.

It is found in the cell outer membrane. In terms of biological role, part of the outer membrane protein assembly complex, which is involved in assembly and insertion of beta-barrel proteins into the outer membrane. Constitutes, with BamA, the core component of the assembly machinery. The chain is Outer membrane protein assembly factor BamD from Escherichia coli O157:H7.